The sequence spans 400 residues: Argininosuccinate synthase (400 aa).

Position 8–16 (8–16 (AYSGGLDTS)) interacts with ATP. Residue tyrosine 87 participates in L-citrulline binding. ATP is bound at residue glycine 117. Threonine 119, asparagine 123, and aspartate 124 together coordinate L-aspartate. Asparagine 123 contacts L-citrulline. The L-citrulline site is built by arginine 127, serine 175, glutamate 260, and tyrosine 272.

This sequence belongs to the argininosuccinate synthase family. Type 1 subfamily. As to quaternary structure, homotetramer.

The protein localises to the cytoplasm. The enzyme catalyses L-citrulline + L-aspartate + ATP = 2-(N(omega)-L-arginino)succinate + AMP + diphosphate + H(+). It participates in amino-acid biosynthesis; L-arginine biosynthesis; L-arginine from L-ornithine and carbamoyl phosphate: step 2/3. The chain is Argininosuccinate synthase from Mycolicibacterium vanbaalenii (strain DSM 7251 / JCM 13017 / BCRC 16820 / KCTC 9966 / NRRL B-24157 / PYR-1) (Mycobacterium vanbaalenii).